We begin with the raw amino-acid sequence, 83 residues long: NAD(P)H-quinone oxidoreductase subunit L (83 aa).

Transmembrane regions (helical) follow at residues 15–35 and 53–73; these read LFVL…VPLA and LGVY…APFI.

Belongs to the complex I NdhL subunit family. NDH-1 can be composed of about 15 different subunits; different subcomplexes with different compositions have been identified which probably have different functions.

The protein localises to the cellular thylakoid membrane. It catalyses the reaction a plastoquinone + NADH + (n+1) H(+)(in) = a plastoquinol + NAD(+) + n H(+)(out). The catalysed reaction is a plastoquinone + NADPH + (n+1) H(+)(in) = a plastoquinol + NADP(+) + n H(+)(out). Its function is as follows. NDH-1 shuttles electrons from an unknown electron donor, via FMN and iron-sulfur (Fe-S) centers, to quinones in the respiratory and/or the photosynthetic chain. The immediate electron acceptor for the enzyme in this species is believed to be plastoquinone. Couples the redox reaction to proton translocation, and thus conserves the redox energy in a proton gradient. Cyanobacterial NDH-1 also plays a role in inorganic carbon-concentration. This is NAD(P)H-quinone oxidoreductase subunit L from Synechococcus sp. (strain CC9902).